The sequence spans 136 residues: Small ribosomal subunit protein uS19 (136 aa).

The protein belongs to the universal ribosomal protein uS19 family.

Protein S19 forms a complex with S13 that binds strongly to the 16S ribosomal RNA. This chain is Small ribosomal subunit protein uS19, found in Methanothrix thermoacetophila (strain DSM 6194 / JCM 14653 / NBRC 101360 / PT) (Methanosaeta thermophila).